We begin with the raw amino-acid sequence, 104 residues long: ATP-dependent Clp protease adapter protein ClpS (104 aa).

Belongs to the ClpS family. Binds to the N-terminal domain of the chaperone ClpA.

Functionally, involved in the modulation of the specificity of the ClpAP-mediated ATP-dependent protein degradation. The chain is ATP-dependent Clp protease adapter protein ClpS from Oleidesulfovibrio alaskensis (strain ATCC BAA-1058 / DSM 17464 / G20) (Desulfovibrio alaskensis).